Reading from the N-terminus, the 396-residue chain is Elongation factor Tu (396 aa).

A tr-type G domain is found at Lys10–Glu206. The interval Gly19–Thr26 is G1. Gly19–Thr26 is a binding site for GTP. Thr26 serves as a coordination point for Mg(2+). The segment at Gly60 to Asn64 is G2. The tract at residues Asp81–Gly84 is G3. GTP is bound by residues Asp81–His85 and Asn136–Asp139. The segment at Asn136–Asp139 is G4. The G5 stretch occupies residues Ser174–Leu176.

This sequence belongs to the TRAFAC class translation factor GTPase superfamily. Classic translation factor GTPase family. EF-Tu/EF-1A subfamily. In terms of assembly, monomer.

It localises to the cytoplasm. The catalysed reaction is GTP + H2O = GDP + phosphate + H(+). Its function is as follows. GTP hydrolase that promotes the GTP-dependent binding of aminoacyl-tRNA to the A-site of ribosomes during protein biosynthesis. In Dechloromonas aromatica (strain RCB), this protein is Elongation factor Tu.